A 310-amino-acid chain; its full sequence is Putative carboxypeptidase SCO6489 (310 aa).

Residue Ser-116 is the Nucleophile of the active site. Catalysis depends on charge relay system residues Glu-212 and His-277.

The protein belongs to the peptidase S66 family.

This is Putative carboxypeptidase SCO6489 from Streptomyces coelicolor (strain ATCC BAA-471 / A3(2) / M145).